Consider the following 62-residue polypeptide: Small ribosomal subunit protein bS21 (62 aa).

A compositionally biased stretch (basic and acidic residues) spans 43-52 (VKKKLKSEAA). A disordered region spans residues 43-62 (VKKKLKSEAARKRKNRRRFK). Basic residues predominate over residues 53–62 (RKRKNRRRFK).

Belongs to the bacterial ribosomal protein bS21 family.

The sequence is that of Small ribosomal subunit protein bS21 from Lactiplantibacillus plantarum (strain ATCC BAA-793 / NCIMB 8826 / WCFS1) (Lactobacillus plantarum).